A 139-amino-acid chain; its full sequence is Putative pre-16S rRNA nuclease (139 aa).

Belongs to the YqgF nuclease family.

The protein resides in the cytoplasm. Its function is as follows. Could be a nuclease involved in processing of the 5'-end of pre-16S rRNA. This is Putative pre-16S rRNA nuclease from Streptococcus pyogenes serotype M3 (strain ATCC BAA-595 / MGAS315).